The sequence spans 837 residues: Probable aldehyde oxidase 4 (837 aa).

The region spanning Glu-9–Leu-98 is the 2Fe-2S ferredoxin-type domain. [2Fe-2S] cluster is bound by residues Cys-50, Cys-55, Cys-58, and Cys-80. The region spanning Ile-240–Ser-427 is the FAD-binding PCMH-type domain.

This sequence belongs to the xanthine dehydrogenase family. In terms of assembly, aldehyde oxidases (AO) are homodimers and heterodimers of AO subunits. It depends on [2Fe-2S] cluster as a cofactor. FAD is required as a cofactor. The cofactor is Mo-molybdopterin.

The catalysed reaction is an aldehyde + O2 + H2O = a carboxylate + H2O2 + H(+). The sequence is that of Probable aldehyde oxidase 4 from Oryza sativa subsp. japonica (Rice).